A 461-amino-acid chain; its full sequence is Putative long chain fatty acid-CoA ligase VraA (461 aa).

Belongs to the ATP-dependent AMP-binding enzyme family.

In Staphylococcus haemolyticus (strain JCSC1435), this protein is Putative long chain fatty acid-CoA ligase VraA (vraA).